We begin with the raw amino-acid sequence, 235 residues long: Triosephosphate isomerase (235 aa).

7-9 (NFK) is a binding site for substrate. His-92 acts as the Electrophile in catalysis. The active-site Proton acceptor is Glu-161. Residues Gly-167 and Ser-197 each coordinate substrate.

Belongs to the triosephosphate isomerase family. In terms of assembly, homodimer.

The protein resides in the cytoplasm. The enzyme catalyses D-glyceraldehyde 3-phosphate = dihydroxyacetone phosphate. It participates in carbohydrate biosynthesis; gluconeogenesis. Its pathway is carbohydrate degradation; glycolysis; D-glyceraldehyde 3-phosphate from glycerone phosphate: step 1/1. Involved in the gluconeogenesis. Catalyzes stereospecifically the conversion of dihydroxyacetone phosphate (DHAP) to D-glyceraldehyde-3-phosphate (G3P). The polypeptide is Triosephosphate isomerase (Helicobacter hepaticus (strain ATCC 51449 / 3B1)).